The following is a 198-amino-acid chain: Type II secretion system protein J (198 aa).

The propeptide at 1–7 (MIRRSSG) is leader sequence. Phe8 is subject to N-methylphenylalanine. A helical transmembrane segment spans residues 8-28 (FTLVEMLLALAILAALSVAAV).

It belongs to the GSP J family. As to quaternary structure, type II secretion is composed of four main components: the outer membrane complex, the inner membrane complex, the cytoplasmic secretion ATPase and the periplasm-spanning pseudopilus. Interacts with core component PulG. Cleaved by prepilin peptidase. In terms of processing, methylated by prepilin peptidase at the amino group of the N-terminal phenylalanine once the leader sequence is cleaved by prepilin peptidase.

It localises to the cell inner membrane. Component of the type II secretion system required for the energy-dependent secretion of extracellular factors such as proteases and toxins from the periplasm. Part of the pseudopilus tip complex that is critical for the recognition and binding of secretion substrates. The sequence is that of Type II secretion system protein J (pulJ) from Klebsiella pneumoniae.